The chain runs to 500 residues: Protein ASPARTIC PROTEASE IN GUARD CELL 1 (500 aa).

An N-terminal signal peptide occupies residues M1–A24. The 335-residue stretch at Y162–S496 folds into the Peptidase A1 domain. Residue D180 is part of the active site. 6 disulfides stabilise this stretch: C190/C193, C196/C271, C217/C235, C222/C230, C307/C500, and C419/C461. D379 is a catalytic residue.

This sequence belongs to the peptidase A1 family. In terms of tissue distribution, expressed in young seedlings, leaves, guard-cells, stems, flowers and siliques, but not in roots or mesophyll cells.

Its subcellular location is the endoplasmic reticulum. With respect to regulation, inhibited by pepstatin A. Its function is as follows. Aspartic protease involved in drought avoidance through abscisic acid signaling. The chain is Protein ASPARTIC PROTEASE IN GUARD CELL 1 (ASPG1) from Arabidopsis thaliana (Mouse-ear cress).